The following is a 617-amino-acid chain: NADPH-dependent diflavin oxidoreductase 1 (617 aa).

Residues Pro-3 to Leu-147 enclose the Flavodoxin-like domain. Residues Ser-9–Ala-14, Ser-56–Gly-59, Leu-94–Cys-103, and Glu-129 each bind FMN. The region spanning Asp-226–Pro-465 is the FAD-binding FR-type domain. FAD-binding positions include Arg-404–Ser-407 and Gly-438–Ser-441. NADP(+) contacts are provided by residues Thr-479, Ser-534–Arg-535, and Arg-540–Gln-544. FAD is bound at residue Trp-617.

The protein belongs to the NADPH-dependent diflavin oxidoreductase NDOR1 family. In the N-terminal section; belongs to the flavodoxin family. It in the C-terminal section; belongs to the flavoprotein pyridine nucleotide cytochrome reductase family. As to quaternary structure, interacts with DRE2; as part of the cytosolic iron-sulfur (Fe-S) protein assembly (CIA) machinery. FAD serves as cofactor. The cofactor is FMN.

Its subcellular location is the cytoplasm. The protein resides in the mitochondrion. The catalysed reaction is 2 oxidized [2Fe-2S]-[protein] + NADPH = 2 reduced [2Fe-2S]-[protein] + NADP(+) + H(+). NADPH-dependent reductase which is a central component of the cytosolic iron-sulfur (Fe-S) protein assembly (CIA) machinery. Transfers electrons from NADPH via its FAD and FMN prosthetic groups to the [2Fe-2S] cluster of DRE2, another key component of the CIA machinery. In turn, this reduced cluster provides electrons for assembly of cytosolic iron-sulfur cluster proteins. Positively controls H(2)O(2)-induced cell death. The protein is NADPH-dependent diflavin oxidoreductase 1 of Cryptococcus neoformans var. neoformans serotype D (strain B-3501A) (Filobasidiella neoformans).